We begin with the raw amino-acid sequence, 904 residues long: NADH-quinone oxidoreductase subunit G (904 aa).

Residues 1–83 (MATIHVDGKE…GSWISIDDEE (83 aa)) form the 2Fe-2S ferredoxin-type domain. [2Fe-2S] cluster contacts are provided by Cys34, Cys45, Cys48, and Cys67. The region spanning 83-122 (EAKVFRASVVEWLMTNHPHDCPVCEEGGHCHLQDMTVMTG) is the 4Fe-4S His(Cys)3-ligated-type domain. Residues His99, Cys103, Cys106, Cys112, Cys151, Cys154, Cys157, Cys201, Cys228, Cys231, Cys235, and Cys263 each contribute to the [4Fe-4S] cluster site. The 4Fe-4S Mo/W bis-MGD-type domain occupies 221 to 277 (MQFSPSICHGCSSGCNISPGERYGELRRIENRFNGSVNQYFLCDRGRFGYGYVNRKD).

It belongs to the complex I 75 kDa subunit family. As to quaternary structure, composed of 13 different subunits. Subunits NuoCD, E, F, and G constitute the peripheral sector of the complex. It depends on [2Fe-2S] cluster as a cofactor. Requires [4Fe-4S] cluster as cofactor.

It catalyses the reaction a quinone + NADH + 5 H(+)(in) = a quinol + NAD(+) + 4 H(+)(out). Functionally, NDH-1 shuttles electrons from NADH, via FMN and iron-sulfur (Fe-S) centers, to quinones in the respiratory chain. The immediate electron acceptor for the enzyme in this species is believed to be ubiquinone. Couples the redox reaction to proton translocation (for every two electrons transferred, four hydrogen ions are translocated across the cytoplasmic membrane), and thus conserves the redox energy in a proton gradient. Required for plants roots colonization. This Pseudomonas fluorescens protein is NADH-quinone oxidoreductase subunit G (nuoG).